The primary structure comprises 151 residues: Protein E6 (151 aa).

2 zinc fingers span residues 30-66 and 103-139; these read CVYC…CKKC and CHRC…CTNC. The PDZ-binding domain motif lies at 149–151; sequence TQV.

The protein belongs to the papillomaviridae E6 protein family. Forms homodimers. Interacts with ubiquitin-protein ligase UBE3A/E6-AP and thus forms a complex with human TP53. Interacts with human NFX1 and MAGI3. Interacts with human IRF3; this interaction inhibits the establishment of antiviral state. Interacts with human TYK2; this interaction inhibits JAK-STAT activation by interferon alpha. Interacts with host DLG1; this interaction leads to the proteasomal degradation of DLG1.

Its subcellular location is the host cytoplasm. It is found in the host nucleus. Functionally, plays a major role in the induction and maintenance of cellular transformation. Acts mainly as an oncoprotein by stimulating the destruction of many host cell key regulatory proteins. E6 associates with host UBE3A/E6-AP ubiquitin-protein ligase, and inactivates tumor suppressors TP53 and TP73 by targeting them to the 26S proteasome for degradation. In turn, DNA damage and chromosomal instabilities increase and lead to cell proliferation and cancer development. The complex E6/E6AP targets several other substrates to degradation via the proteasome including host DLG1 or NFX1, a repressor of human telomerase reverse transcriptase (hTERT). The resulting increased expression of hTERT prevents the shortening of telomere length leading to cell immortalization. Other cellular targets including BAK1, Fas-associated death domain-containing protein (FADD) and procaspase 8, are degraded by E6/E6AP causing inhibition of apoptosis. E6 also inhibits immune response by interacting with host IRF3 and TYK2. These interactions prevent IRF3 transcriptional activities and inhibit TYK2-mediated JAK-STAT activation by interferon alpha resulting in inhibition of the interferon signaling pathway. This Homo sapiens (Human) protein is Protein E6.